The following is a 200-amino-acid chain: Pyridoxal 5'-phosphate synthase subunit PdxT (200 aa).

46–48 lines the L-glutamine pocket; sequence GES. The active-site Nucleophile is the Cys-78. L-glutamine is bound by residues Arg-107 and 138–139; that span reads IR. Catalysis depends on charge relay system residues His-175 and Glu-177.

Belongs to the glutaminase PdxT/SNO family. In terms of assembly, in the presence of PdxS, forms a dodecamer of heterodimers. Only shows activity in the heterodimer.

It catalyses the reaction aldehydo-D-ribose 5-phosphate + D-glyceraldehyde 3-phosphate + L-glutamine = pyridoxal 5'-phosphate + L-glutamate + phosphate + 3 H2O + H(+). The enzyme catalyses L-glutamine + H2O = L-glutamate + NH4(+). The protein operates within cofactor biosynthesis; pyridoxal 5'-phosphate biosynthesis. Its function is as follows. Catalyzes the hydrolysis of glutamine to glutamate and ammonia as part of the biosynthesis of pyridoxal 5'-phosphate. The resulting ammonia molecule is channeled to the active site of PdxS. The sequence is that of Pyridoxal 5'-phosphate synthase subunit PdxT from Corynebacterium glutamicum (strain R).